Reading from the N-terminus, the 248-residue chain is 3-deoxy-manno-octulosonate cytidylyltransferase (248 aa).

This sequence belongs to the KdsB family.

The protein localises to the cytoplasm. The catalysed reaction is 3-deoxy-alpha-D-manno-oct-2-ulosonate + CTP = CMP-3-deoxy-beta-D-manno-octulosonate + diphosphate. Its pathway is nucleotide-sugar biosynthesis; CMP-3-deoxy-D-manno-octulosonate biosynthesis; CMP-3-deoxy-D-manno-octulosonate from 3-deoxy-D-manno-octulosonate and CTP: step 1/1. It participates in bacterial outer membrane biogenesis; lipopolysaccharide biosynthesis. In terms of biological role, activates KDO (a required 8-carbon sugar) for incorporation into bacterial lipopolysaccharide in Gram-negative bacteria. This is 3-deoxy-manno-octulosonate cytidylyltransferase from Klebsiella pneumoniae subsp. pneumoniae (strain ATCC 700721 / MGH 78578).